Here is a 227-residue protein sequence, read N- to C-terminus: MKVTYHGHSVITVETKDHHIIFDPFLTGNSLTDIKPEDVKADVILLTHGHNDHVGDTEQIAKQNNALVIAPNELAVYLGWKGLNVHPMHIGGSRQFDFGKVKLTQAFHGSAITDEENKTITYTGMPAGILLTVEDKTIFHAGDTALFSDMKLIGELNHIDLAFLPIGDNFTMGPEDAKLAAEWLRAKQVVPVHYNTFPVIEQDPEAFADSLPGGVGKVMSVGETIEL.

It belongs to the UPF0173 family.

This chain is UPF0173 metal-dependent hydrolase YtkL (ytkL), found in Bacillus subtilis (strain 168).